The following is a 252-amino-acid chain: Ciliogenesis and planar polarity effector 2 (252 aa).

Positions 46-252 (QMNVDLVRYK…LRETSSEIIV (207 aa)) are small GTPase-like. Residues 62 to 67 (TGVGKS) and 173 to 176 (TKFD) contribute to the GTP site.

It belongs to the small GTPase superfamily. Rab family.

The protein localises to the cytoplasm. It localises to the cytoskeleton. It is found in the cilium basal body. Functionally, potential effector of the planar cell polarity signaling pathway. Plays a role in targeted membrane trafficking most probably at the level of vesicle fusion with membranes. Involved in cilium biogenesis by regulating the transport of cargo proteins to the basal body and to the apical tips of cilia. More generally involved in exocytosis in secretory cells. This is Ciliogenesis and planar polarity effector 2 (cplane2) from Danio rerio (Zebrafish).